Here is a 226-residue protein sequence, read N- to C-terminus: Ras-related protein RABA4a (226 aa).

Thr-2 bears the N-acetylthreonine mark. Gly-24–Ser-31 serves as a coordination point for GTP. The short motif at Ser-46–Phe-54 is the Effector region element. GTP is bound by residues Asp-72–Gln-76, Asn-130–Asp-133, and Ser-160–Ala-161. A disordered region spans residues Ala-189–Ser-226. The segment covering Pro-217 to Ser-226 has biased composition (polar residues). S-geranylgeranyl cysteine attachment occurs at residues Cys-223 and Cys-224.

The protein belongs to the small GTPase superfamily. Rab family. In terms of assembly, interacts with TCTP1.

It is found in the cell membrane. Its function is as follows. Intracellular vesicle trafficking and protein transport. This Arabidopsis thaliana (Mouse-ear cress) protein is Ras-related protein RABA4a.